The following is an 809-amino-acid chain: Ferric-pyoverdine BN7/BN8 receptor (809 aa).

The N-terminal stretch at 1–45 (MNHTARKRQGWQRSVSQKLAGAVVQGIACMGASAPLLLMPAWATA) is a signal peptide. The TBDR plug domain occupies 166 to 273 (TPRETPQSLT…PSATINLIRK (108 aa)). Positions 278-809 (EAQASITGEA…NVMTSFKYSF (532 aa)) constitute a TBDR beta-barrel domain. Residues 792–809 (YGVYGTPRNVMTSFKYSF) carry the TonB C-terminal box motif.

This sequence belongs to the TonB-dependent receptor family.

Its subcellular location is the cell outer membrane. In terms of biological role, specific receptor for the siderophores ferric pyoverdines (pseudobactins) BN8 and BN7, iron chelating molecules that allow the organism to extract iron from the environment, especially under iron-restricted conditions. This chain is Ferric-pyoverdine BN7/BN8 receptor (pupB), found in Pseudomonas putida (Arthrobacter siderocapsulatus).